Consider the following 61-residue polypeptide: Photosystem II reaction center protein K (61 aa).

Positions 1-24 are excised as a propeptide; the sequence is MLNIFSLICICINSALHSSSFFFA. The chain crosses the membrane as a helical span at residues 40-60; the sequence is MPVIPVLFFLLALVWQAAVSF.

Belongs to the PsbK family. As to quaternary structure, PSII is composed of 1 copy each of membrane proteins PsbA, PsbB, PsbC, PsbD, PsbE, PsbF, PsbH, PsbI, PsbJ, PsbK, PsbL, PsbM, PsbT, PsbX, PsbY, PsbZ, Psb30/Ycf12, at least 3 peripheral proteins of the oxygen-evolving complex and a large number of cofactors. It forms dimeric complexes.

The protein localises to the plastid. The protein resides in the chloroplast thylakoid membrane. Its function is as follows. One of the components of the core complex of photosystem II (PSII). PSII is a light-driven water:plastoquinone oxidoreductase that uses light energy to abstract electrons from H(2)O, generating O(2) and a proton gradient subsequently used for ATP formation. It consists of a core antenna complex that captures photons, and an electron transfer chain that converts photonic excitation into a charge separation. This Liriodendron tulipifera (Tuliptree) protein is Photosystem II reaction center protein K.